The sequence spans 98 residues: Keratin, high sulfur matrix protein, IIIB4 (98 aa).

At Ala1 the chain carries N-acetylalanine.

It belongs to the KRTAP type 3 family. In terms of assembly, interacts with wool keratins. In terms of tissue distribution, wool.

Functionally, in the wool cortex, wool keratin intermediate filaments are embedded in an interfilamentous matrix, consisting of hair keratin-associated proteins (KRTAP), which are essential for the formation of a rigid and resistant wool shaft through their extensive disulfide bond cross-linking with abundant cysteine residues of wool keratins. The matrix proteins include the high-sulfur and high-glycine-tyrosine keratins. This chain is Keratin, high sulfur matrix protein, IIIB4, found in Ovis aries (Sheep).